We begin with the raw amino-acid sequence, 210 residues long: Small ribosomal subunit protein bS6 (210 aa).

Residues 99–210 are disordered; it reads PLPTKRNTKS…KDTKEVKEEG (112 aa). Residues 120–210 show a composition bias toward basic and acidic residues; it reads NDTKEVKEAK…KDTKEVKEEG (91 aa).

The protein belongs to the bacterial ribosomal protein bS6 family.

Its function is as follows. Binds together with bS18 to 16S ribosomal RNA. This chain is Small ribosomal subunit protein bS6, found in Prochlorococcus marinus (strain SARG / CCMP1375 / SS120).